An 84-amino-acid chain; its full sequence is Small ribosomal subunit protein bS16 (84 aa).

The protein belongs to the bacterial ribosomal protein bS16 family.

This Methylococcus capsulatus (strain ATCC 33009 / NCIMB 11132 / Bath) protein is Small ribosomal subunit protein bS16.